We begin with the raw amino-acid sequence, 445 residues long: Secretin receptor (445 aa).

The first 21 residues, 1–21 (MCPRPGPPLGLWLLLGFACAA), serve as a signal peptide directing secretion. The Extracellular segment spans residues 22–137 (HLVGAPPRLC…HERQHAYLLK (116 aa)). Intrachain disulfides connect Cys44/Cys71, Cys62/Cys103, and Cys85/Cys119. Residues Asn68, Asn96, Asn102, and Asn124 are each glycosylated (N-linked (GlcNAc...) asparagine). The helical transmembrane segment at 138–163 (LKVMYTVGYSSSLVMLLVALGILCAF) threads the bilayer. Residues 164–170 (RRLHCTR) lie on the Cytoplasmic side of the membrane. The chain crosses the membrane as a helical span at residues 171-191 (NYIHMHLFLSFILRALSNFIK). Topologically, residues 192 to 212 (DAVLFSSDDAIHCDAHRVGCK) are extracellular. Cys211 and Cys281 are disulfide-bonded. Residues 213 to 235 (LVMVFFQYCIMANYAWLLVEGLY) form a helical membrane-spanning segment. Residues 236-250 (LHSLLVVSFFSERKC) lie on the Cytoplasmic side of the membrane. A helical membrane pass occupies residues 251–272 (LQGFVVLGWGSPAMFVTSWAVT). The Extracellular segment spans residues 273 to 287 (RHFLEDSGCWDINAN). Residues 288 to 311 (AAIWWVIRGPVILSILINFILFIN) traverse the membrane as a helical segment. At 312–336 (ILRILTRKLRTQETRGQDMNHYKRL) the chain is on the cytoplasmic side. Residues 337 to 352 (ARSTLLLIPLFGVHYI) form a helical membrane-spanning segment. The Extracellular portion of the chain corresponds to 353 to 363 (VFVFSPEGAME). Residues 364–387 (IQLFFELALGSFQGLVVAVLYCFL) traverse the membrane as a helical segment. At 388–445 (NGEVQLEVQKKWQQWHLWEPPLCPVALSSSFSNGTSSLNSTKACPSGRSRDTCKVSII) the chain is on the cytoplasmic side.

This sequence belongs to the G-protein coupled receptor 2 family. Phosphorylated on Ser and Thr residues at the cytoplasmic C-terminus by G protein-coupled receptor kinases (GRKs).

Its subcellular location is the cell membrane. It localises to the basolateral cell membrane. G protein-coupled receptor activated by secretin (SCT), which is involved in different processes such as regulation of the pH of the duodenal content, food intake and water homeostasis. Ligand binding causes a conformation change that triggers signaling via guanine nucleotide-binding proteins (G proteins) and activates cAMP-dependent pathway. Upon binding to secretin, regulates the pH of the duodenum by (1) inhibiting the secretion of gastric acid from the parietal cells of the stomach and (2) stimulating the production of bicarbonate (NaHCO(3)) from the ductal cells of the pancreas. In addition to regulating the pH of the duodenal content, plays a central role in diet induced thermogenesis: acts as a non-sympathetic brown fat (BAT) activator mediating prandial thermogenesis, which consequentially induces satiation. Mechanistically, secretin released by the gut after a meal binds to secretin receptor (SCTR) in brown adipocytes, activating brown fat thermogenesis by stimulating lipolysis, which is sensed in the brain and promotes satiation. Also able to stimulate lipolysis in white adipocytes. Also plays an important role in cellular osmoregulation by regulating renal water reabsorption. Also plays a role in the central nervous system: required for synaptic plasticity. The sequence is that of Secretin receptor (SCTR) from Oryctolagus cuniculus (Rabbit).